A 153-amino-acid chain; its full sequence is Large ribosomal subunit protein uL30 (153 aa).

The protein belongs to the universal ribosomal protein uL30 family. As to quaternary structure, part of the 50S ribosomal subunit.

The polypeptide is Large ribosomal subunit protein uL30 (Methanosarcina mazei (strain ATCC BAA-159 / DSM 3647 / Goe1 / Go1 / JCM 11833 / OCM 88) (Methanosarcina frisia)).